The chain runs to 582 residues: ATP-dependent lipid A-core flippase (582 aa).

The next 5 membrane-spanning stretches (helical) occupy residues 16–36 (LWPM…ALII), 63–83 (VLLW…ASGF), 153–173 (IIGL…ILIV), 253–273 (PIIQ…ASFP), and 275–295 (VMET…IALM). Residues 28–310 (AVAAIALIIN…LTNVNAQFQR (283 aa)) form the ABC transmembrane type-1 domain. The ABC transporter domain occupies 342–578 (LEFRQVNFAY…NGAYAQLHRM (237 aa)). 376-383 (GRSGSGKS) serves as a coordination point for ATP.

This sequence belongs to the ABC transporter superfamily. Lipid exporter (TC 3.A.1.106) family. Homodimer.

It localises to the cell inner membrane. The enzyme catalyses ATP + H2O + lipid A-core oligosaccharideSide 1 = ADP + phosphate + lipid A-core oligosaccharideSide 2.. Its function is as follows. Involved in lipopolysaccharide (LPS) biosynthesis. Translocates lipid A-core from the inner to the outer leaflet of the inner membrane. Transmembrane domains (TMD) form a pore in the inner membrane and the ATP-binding domain (NBD) is responsible for energy generation. The chain is ATP-dependent lipid A-core flippase from Pectobacterium atrosepticum (strain SCRI 1043 / ATCC BAA-672) (Erwinia carotovora subsp. atroseptica).